The following is a 534-amino-acid chain: Thromboxane-A synthase (534 aa).

Over 1 to 10 (MEVLGFLSPE) the chain is Cytoplasmic. A helical membrane pass occupies residues 11 to 31 (LNGPMVTMALAVVLLALLKWY). Topologically, residues 32–75 (STSAFSRLEKLGIRHPKPSPFIGNLTFFRQGFWESHMELRKQYG) are lumenal. Residues 76–96 (PLSGYYLGRRMIVVISDPDMI) form a helical membrane-spanning segment. Residues 97 to 223 (KQVLAEKFSN…RRFFAFSVPR (127 aa)) are Cytoplasmic-facing. Residues 224–244 (LILVLILSFPSIMVPLARILP) form a helical membrane-spanning segment. At 245–336 (NKKRDEVNGF…LTVDEVVGQA (92 aa)) the chain is on the lumenal side. The chain crosses the membrane as a helical span at residues 337-357 (FLFLIAGYEIITNTLSFVTYL). Residues 358–534 (LATNPDCQEK…NGVYIRIVPR (177 aa)) are Cytoplasmic-facing. Heme is bound at residue cysteine 480.

The protein belongs to the cytochrome P450 family. As to quaternary structure, monomer. Heme serves as cofactor. Expressed in lung, kidney and thymus.

It is found in the endoplasmic reticulum membrane. The catalysed reaction is prostaglandin H2 = thromboxane A2. It catalyses the reaction prostaglandin H2 = (12S)-hydroxy-(5Z,8E,10E)-heptadecatrienoate + malonaldehyde. The enzyme catalyses a hydroperoxyeicosatetraenoate = an oxoeicosatetraenoate + H2O. It carries out the reaction (15S)-hydroperoxy-(5Z,8Z,11Z,13E)-eicosatetraenoate = 15-oxo-(5Z,8Z,11Z,13E)-eicosatetraenoate + H2O. The catalysed reaction is (15S)-hydroperoxy-(5Z,8Z,11Z,13E)-eicosatetraenoate + AH2 = (15S)-hydroxy-(5Z,8Z,11Z,13E)-eicosatetraenoate + A + H2O. Its function is as follows. Catalyzes the conversion of prostaglandin H2 (PGH2) to thromboxane A2 (TXA2), a potent inducer of blood vessel constriction and platelet aggregation. Also cleaves PGH2 to 12-hydroxy-heptadecatrienoicacid (12-HHT) and malondialdehyde, which is known to act as a mediator of DNA damage. 12-HHT and malondialdehyde are formed stoichiometrically in the same amounts as TXA2. Additionally, displays dehydratase activity, toward (15S)-hydroperoxy-(5Z,8Z,11Z,13E)-eicosatetraenoate (15(S)-HPETE) producing 15-KETE and 15-HETE. In Sus scrofa (Pig), this protein is Thromboxane-A synthase (TBXAS1).